A 141-amino-acid polypeptide reads, in one-letter code: Putative antiporter subunit mnhB2 (141 aa).

4 helical membrane passes run 10–30 (SVTKIVVFILLTFGFYVFFAG), 35–55 (GGGFIGGLIFSSAFILMFLAF), 70–90 (KLMIIGSLISVATASVPMFFG), and 116–136 (LFELGILLTVVGVIVTVMLSI).

The protein belongs to the CPA3 antiporters (TC 2.A.63) subunit B family. In terms of assembly, may form a heterooligomeric complex that consists of seven subunits: mnhA2, mnhB2, mnhC2, mnhD2, mnhE2, mnhF2 and mnhG2.

Its subcellular location is the cell membrane. This Staphylococcus epidermidis (strain ATCC 35984 / DSM 28319 / BCRC 17069 / CCUG 31568 / BM 3577 / RP62A) protein is Putative antiporter subunit mnhB2 (mnhB2).